A 302-amino-acid polypeptide reads, in one-letter code: Homoserine O-acetyltransferase (302 aa).

The Acyl-thioester intermediate role is filled by Cys142. Residues Lys163 and Ser192 each coordinate substrate. The active-site Proton acceptor is His235. Glu237 is an active-site residue. A substrate-binding site is contributed by Arg249.

It belongs to the MetA family.

It localises to the cytoplasm. The enzyme catalyses L-homoserine + acetyl-CoA = O-acetyl-L-homoserine + CoA. It functions in the pathway amino-acid biosynthesis; L-methionine biosynthesis via de novo pathway; O-acetyl-L-homoserine from L-homoserine: step 1/1. Functionally, transfers an acetyl group from acetyl-CoA to L-homoserine, forming acetyl-L-homoserine. This Geobacillus sp. (strain WCH70) protein is Homoserine O-acetyltransferase.